The chain runs to 505 residues: Lysine--tRNA ligase, heat inducible (505 aa).

Residues Lys-114 and Lys-156 each carry the N6-acetyllysine modification. Glu-415 and Glu-422 together coordinate Mg(2+).

It belongs to the class-II aminoacyl-tRNA synthetase family. In terms of assembly, homodimer. Requires Mg(2+) as cofactor.

It localises to the cytoplasm. It carries out the reaction tRNA(Lys) + L-lysine + ATP = L-lysyl-tRNA(Lys) + AMP + diphosphate. The sequence is that of Lysine--tRNA ligase, heat inducible (lysU) from Escherichia coli O157:H7.